The chain runs to 149 residues: Protein-export protein SecB (149 aa).

The protein belongs to the SecB family. Homotetramer, a dimer of dimers. One homotetramer interacts with 1 SecA dimer.

The protein resides in the cytoplasm. Functionally, one of the proteins required for the normal export of preproteins out of the cell cytoplasm. It is a molecular chaperone that binds to a subset of precursor proteins, maintaining them in a translocation-competent state. It also specifically binds to its receptor SecA. This is Protein-export protein SecB from Acidithiobacillus ferrooxidans (strain ATCC 23270 / DSM 14882 / CIP 104768 / NCIMB 8455) (Ferrobacillus ferrooxidans (strain ATCC 23270)).